Here is a 474-residue protein sequence, read N- to C-terminus: PTS system N-acetylmuramic acid-specific EIIBC component (474 aa).

Residues 1-89 (MAKEISSELL…SELLGDAPVQ (89 aa)) form the PTS EIIB type-1 domain. Topologically, residues 1–123 (MAKEISSELL…LAKFATIFTP (123 aa)) are cytoplasmic. C29 serves as the catalytic Phosphocysteine intermediate; for EIIB activity. The region spanning 115–474 (AKFATIFTPL…LFGCRNVNLD (360 aa)) is the PTS EIIC type-1 domain. Residues 124–144 (LIPGFIAAGLLLGIATLIATV) form a helical membrane-spanning segment. At 145-157 (MHVPADAQGTLPD) the chain is on the periplasmic side. A helical membrane pass occupies residues 158-178 (ALNFMKVFSKGLFTFLVILVG). Over 179-180 (YN) the chain is Cytoplasmic. A helical transmembrane segment spans residues 181–201 (AAQAFGGTGVNGAIIAALFLL). The Periplasmic portion of the chain corresponds to 202-217 (GYNPAATTGYYAGFHD). A helical transmembrane segment spans residues 218–238 (FFGLPIDPRGNIIGVLIAAWA). At 239-260 (CARIEGMVRRFMPDDLDMLLTS) the chain is on the cytoplasmic side. Residues 261-281 (LITLLITATLAYLIIMPLGGW) traverse the membrane as a helical segment. At 282–301 (LFEGMSWLFMHLNSNPFGCA) the chain is on the periplasmic side. The chain crosses the membrane as a helical span at residues 302-322 (VLAGLFLIAVVFGVHQGFIPV). Residues 323–334 (YLALMDSQGFNS) are Cytoplasmic-facing. Residues 335-355 (LFPILSMAGAGQVGAALALYW) traverse the membrane as a helical segment. Residues 356–368 (RAQPHSALRSQVR) are Periplasmic-facing. A helical transmembrane segment spans residues 369–389 (GAIIPGLLGVGEPLIYGVTLP). Over 390–393 (RMKP) the chain is Cytoplasmic. A helical membrane pass occupies residues 394 to 414 (FVTACLGGAAGGLFIGLIAWW). At 415-440 (GLPMGLNSAFGPSGLVALPLMTSAQG) the chain is on the periplasmic side. The helical transmembrane segment at 441 to 461 (ILPAMAVYAGGILVAWVCGFI) threads the bilayer. At 462-474 (FTTLFGCRNVNLD) the chain is on the cytoplasmic side.

It localises to the cell inner membrane. It catalyses the reaction N-acetyl-beta-D-muramate(out) + N(pros)-phospho-L-histidyl-[protein] = N-acetyl-beta-D-muramate 6-phosphate(in) + L-histidyl-[protein]. In terms of biological role, the phosphoenolpyruvate-dependent sugar phosphotransferase system (sugar PTS), a major carbohydrate active transport system, catalyzes the phosphorylation of incoming sugar substrates concomitantly with their translocation across the cell membrane. This system is involved in N-acetylmuramic acid (MurNAc) transport, yielding cytoplasmic MurNAc-6-P. Is also able to take up anhydro-N-acetylmuramic acid (anhMurNAc), but cannot phosphorylate the carbon 6, probably because of the 1,6-anhydro ring. In Shigella flexneri, this protein is PTS system N-acetylmuramic acid-specific EIIBC component (murP).